The chain runs to 367 residues: Gelsolin-like protein 1 (367 aa).

The interval 1–185 is actin binding; the sequence is MATGLIKAKE…GQKQQIYVHE (185 aa). Gelsolin-like repeat units follow at residues 56-141 and 179-225; these read NFKV…ELFR and QQIY…KAMQ. Residues 106 to 109 form an actin-actin interfilament contact point region; that stretch reads DEYG. Positions 186–295 are actin binding, Actin-severing; the sequence is VPLVKERLDH…LKTTEVKRGA (110 aa). Residues 235 to 257 form a disordered region; the sequence is PKAEAETLEDESTPESHKFYTSL. One copy of the Gelsolin-like 3 repeat lies at 287–322; that stretch reads KTTEVKRGAVNSKDFSSNDVFILDTGDQCFVWVGKG. The tract at residues 296–366 is actin-severing, Ca-sensitive; sequence VNSKDFSSND…LCKAFNVAIA (71 aa).

It belongs to the villin/gelsolin family. Interacts with actin monomers and filaments. In terms of tissue distribution, expressed in circular and longitudinal muscle, pseudohearts, pharynx and gizzard. Also expressed in male germ cells at the proximal pole of primary spermatocytes in 16 cell-stage morulae, and in the distal parts of the spermatocytes in 32 and 64 cell-stage morulae. In the spermatids of the 128 cell-stage morulae it is expressed at the proximal pole of the elongated nucleus and the distal pole near the base of the flagellae.

It is found in the cytoplasm. Its subcellular location is the cytoskeleton. In terms of biological role, calcium-regulated protein that binds to the plus (or barbed) ends of actin monomers or filaments, preventing monomer exchange (end-blocking or capping). Can promote the assembly of monomers into filaments (nucleation) as well as sever existing filaments. This Lumbricus terrestris (Common earthworm) protein is Gelsolin-like protein 1.